We begin with the raw amino-acid sequence, 192 residues long: Large ribosomal subunit protein bL25 (192 aa).

This sequence belongs to the bacterial ribosomal protein bL25 family. CTC subfamily. Part of the 50S ribosomal subunit; part of the 5S rRNA/L5/L18/L25 subcomplex. Contacts the 5S rRNA. Binds to the 5S rRNA independently of L5 and L18.

Functionally, this is one of the proteins that binds to the 5S RNA in the ribosome where it forms part of the central protuberance. This chain is Large ribosomal subunit protein bL25, found in Cytophaga hutchinsonii (strain ATCC 33406 / DSM 1761 / CIP 103989 / NBRC 15051 / NCIMB 9469 / D465).